Reading from the N-terminus, the 1379-residue chain is Partitioning defective protein 3 (1379 aa).

Residues 1–23 (MSASSTSSSSTSCPEGGEPSGSC) show a composition bias toward low complexity. 2 disordered regions span residues 1–32 (MSAS…GEST) and 208–335 (YNVG…SDRK). 2 stretches are compositionally biased toward polar residues: residues 239–256 (SFDQ…PKPS) and 272–284 (ILRS…ASGS). Composition is skewed to basic and acidic residues over residues 302–315 (EVEK…ERKS) and 322–335 (DKNP…SDRK). PDZ domains lie at 381-483 (LVTF…IINR) and 515-599 (VVEL…SRVS). Residues 606 to 626 (TSASSENKENEETLKVVEEEK) are a coiled coil. Residues 659-750 (VIPFINGSSS…EVGMISSNVR (92 aa)) form the PDZ 3 domain. Disordered regions lie at residues 767-873 (DLSR…MGAA), 887-918 (HQRQ…RSPM), 949-1085 (QSME…GGNV), 1273-1301 (VEPV…SGSS), and 1350-1379 (AYET…FPQY). Composition is skewed to low complexity over residues 776-786 (SSPSPSSRMSS) and 798-826 (ATRG…AVPA). Basic and acidic residues-rich tracts occupy residues 828–844 (LTER…RNDE) and 854–869 (FNRE…EKRG). Residues 894–912 (PTSSTQKRSKSQPRSSSQR) show a composition bias toward low complexity. A compositionally biased stretch (polar residues) spans 967–977 (QIPTGSSSKVQ). 2 stretches are compositionally biased toward basic and acidic residues: residues 1030–1040 (KSRDASPEKTP) and 1048–1060 (SVER…DERN). Residues 1290-1301 (STSSGAVASGSS) show a composition bias toward low complexity.

Belongs to the PAR3 family. As to quaternary structure, required, together with pkc-3, for the localization of par-6; par-6 is involved in localizing/maintaining par-3 at the cell periphery. Interacts with par-6 and pkc-3 for localization at the periphery of anterior cortex of the embryo. As to expression, asymmetrically distributed at the periphery of the zygote and in dividing blastomeres of the germline lineage. Coexpressed with par-6; patchy expression observed at the periphery after completion of meiosis I and in meiosis II. On completion of metaphase II, expression is restricted to the anterior 85% of embryo length; this decreases to 55% in embryos between prophase and telophase of the first mitosis. During the first cleavage, expression is detected in the advancing furrow. Transiently coexpressed and colocalized asymmetrically with par-6 and pkc-3, in the developing somatic gonad, including the spermathecal precursor cells of L4 larvae.

Its subcellular location is the cytoplasm. Its function is as follows. In cooperation with pkc-3, required for establishing cell polarity and regulating spindle orientation in the early embryo. Localization is crucial for recruiting par-6 and pkc-3 to the peripheral apical cortex and restricting par-2 to basolateral surfaces. Necessary for apicobasal and anterior-posterior asymmetries associated with cell adhesion and gastrulation during the first few cycles of embryogenesis, and also for epithelial cell polarity in the distal spermatheca. Regulates the asymmetric localization of csnk-1, ppk-1 and gpr-1/2 during the first embryonic division. This is Partitioning defective protein 3 from Caenorhabditis elegans.